Reading from the N-terminus, the 330-residue chain is tRNA U34 carboxymethyltransferase (330 aa).

Carboxy-S-adenosyl-L-methionine-binding positions include K91, W105, K110, G130, 152–154, 181–182, M196, Y200, and R315; these read DPS and IE.

The protein belongs to the class I-like SAM-binding methyltransferase superfamily. CmoB family. As to quaternary structure, homotetramer.

The catalysed reaction is carboxy-S-adenosyl-L-methionine + 5-hydroxyuridine(34) in tRNA = 5-carboxymethoxyuridine(34) in tRNA + S-adenosyl-L-homocysteine + H(+). Its function is as follows. Catalyzes carboxymethyl transfer from carboxy-S-adenosyl-L-methionine (Cx-SAM) to 5-hydroxyuridine (ho5U) to form 5-carboxymethoxyuridine (cmo5U) at position 34 in tRNAs. The sequence is that of tRNA U34 carboxymethyltransferase from Shewanella sp. (strain ANA-3).